We begin with the raw amino-acid sequence, 142 residues long: Large ribosomal subunit protein uL13 (142 aa).

The protein belongs to the universal ribosomal protein uL13 family. In terms of assembly, part of the 50S ribosomal subunit.

In terms of biological role, this protein is one of the early assembly proteins of the 50S ribosomal subunit, although it is not seen to bind rRNA by itself. It is important during the early stages of 50S assembly. The chain is Large ribosomal subunit protein uL13 from Aeromonas hydrophila subsp. hydrophila (strain ATCC 7966 / DSM 30187 / BCRC 13018 / CCUG 14551 / JCM 1027 / KCTC 2358 / NCIMB 9240 / NCTC 8049).